The sequence spans 360 residues: DNA replication and repair protein RecF (360 aa).

30-37 (GHNGSGKT) lines the ATP pocket.

It belongs to the RecF family.

It localises to the cytoplasm. In terms of biological role, the RecF protein is involved in DNA metabolism; it is required for DNA replication and normal SOS inducibility. RecF binds preferentially to single-stranded, linear DNA. It also seems to bind ATP. This chain is DNA replication and repair protein RecF, found in Actinobacillus pleuropneumoniae serotype 3 (strain JL03).